The sequence spans 620 residues: Glutathione-regulated potassium-efflux system protein KefC (620 aa).

Helical transmembrane passes span 4-24, 26-46, 54-74, 90-110, 114-134, 149-169, 178-198, 218-238, 270-290, 294-314, 327-347, and 359-379; these read HTLI…PIAV, LGLG…PWGL, SILH…GLEL, GALQ…LLGL, VAEL…MQAM, FAVL…IPLL, MGAF…VVLL, VFSA…EEVG, GLLL…GTLI, LRIV…LWLI, WFAV…GAAQ, and SLTL…VILN. An RCK N-terminal domain is found at 399-518; sequence QPRVIIAGFG…AGVEKPERET (120 aa). Residues 597–620 are disordered; the sequence is GWQGTEEGKHTGNMADEPETKPSS.

The protein belongs to the monovalent cation:proton antiporter 2 (CPA2) transporter (TC 2.A.37) family. KefC subfamily. Homodimer. Interacts with the regulatory subunit KefF.

It localises to the cell inner membrane. In terms of biological role, pore-forming subunit of a potassium efflux system that confers protection against electrophiles. Catalyzes K(+)/H(+) antiport. The polypeptide is Glutathione-regulated potassium-efflux system protein KefC (Escherichia coli O45:K1 (strain S88 / ExPEC)).